The following is a 683-amino-acid chain: MKAKKTVGSSGSCVRAPALSTEPMAAVKHLAQIPRCTETGMICTQGCVTIEDVTVYFSQEEWKLLDEAQRLLYLDVMLENFTLISSLVYRYEAEAEEKTCAQSLSQTEAPQVRTPKQGQLRQKPHPSDICITVLKDILHLNDLPGQKPYLTEVCTKPQDHKHHRAKNWLKRDVDSLVKSCIFHVAGNPFICSKIGEKFPAIWNLLQPKDIPNGEKQNKIKRGKAFHRDKNNSESDEYKKSSSPQHRLHEYPGVCSAKGGFESNSCEQDLNKYSPAPFRMDQTENRPYECHVCGKWFGQKATLRIHQRRHTGEKPYKCGECGKSFCQSSNLSEHCRVHSGERPFECLECGKAFGCHSSLLRHQRTHTGEWPYECSDCGRLFRQIVSLITHQRTHTTEKPYECGQCEKSFSHKATLTVHQRVHTGEKPYHCEACGKSFSQSANLIKHSKIHTGEKPYECGECGLCFRQRATLMKHQRTHTSERPYECRECGKFFKQYFYLIEHRRIHTTTEFYECEQCGKSYTQKATLIRHQRVHTGESPYKCEECGKAFEYKSRLKRHQRTHTGERPYECAKCGKFFRESYNLAEHQKIHTKAKPYHCDQCGKCFSRRADLVKHQRVHTGERPYTCGECGKTFSRTTNLVQHRRIHTGERPYECDQCGKSFSQVSTLTRHQLLHTGEKPYKCSK.

The 76-residue stretch at 48-123 (VTIEDVTVYF…TPKQGQLRQK (76 aa)) folds into the KRAB domain. The segment covering 102 to 120 (QSLSQTEAPQVRTPKQGQL) has biased composition (polar residues). Disordered stretches follow at residues 102-124 (QSLS…RQKP) and 209-247 (DIPN…QHRL). Residues 225-239 (FHRDKNNSESDEYKK) show a composition bias toward basic and acidic residues. 14 consecutive C2H2-type zinc fingers follow at residues 287–309 (YECH…QRRH), 315–337 (YKCG…CRVH), 343–365 (FECL…QRTH), 371–393 (YECS…QRTH), 399–421 (YECG…QRVH), 427–449 (YHCE…SKIH), 455–477 (YECG…QRTH), 483–505 (YECR…RRIH), 511–533 (YECE…QRVH), 539–561 (YKCE…QRTH), 567–589 (YECA…QKIH), 595–617 (YHCD…QRVH), 623–645 (YTCG…RRIH), and 651–673 (YECD…QLLH).

This sequence belongs to the krueppel C2H2-type zinc-finger protein family.

The protein resides in the nucleus. Functionally, transcriptional repressor. May play a role as regulator of the ubiquitin-proteasome system and autophagy-lysosomal pathway. The polypeptide is Zinc finger protein 418 (Rattus norvegicus (Rat)).